We begin with the raw amino-acid sequence, 289 residues long: MYB transcription factor 69 (289 aa).

HTH myb-type domains are found at residues 9 to 61 (KAGV…TNYL) and 62 to 116 (RPGI…KKKL). 2 DNA-binding regions (H-T-H motif) span residues 37-61 (WRAV…TNYL) and 89-112 (WAAI…NTHL). Disordered regions lie at residues 127–162 (APPR…ADST) and 225–252 (SSAI…QQQQ). The span at 139 to 154 (ADCRRHDMTRSSKDSH) shows a compositional bias: basic and acidic residues.

Mainly expressed in highly lignified tissues such as vascular tissues.

The protein localises to the nucleus. Its function is as follows. Transcription factor that binds to the promoter of MYB31 and MYB42 and activates directly their expression, thus repressing lignin biosynthesis. The protein is MYB transcription factor 69 of Zea mays (Maize).